Here is a 403-residue protein sequence, read N- to C-terminus: Metacaspase-1 (403 aa).

Positions 1–95 are disordered; that stretch reads MFPGSGHNTY…PSGSQSFGQN (95 aa). Over residues 13–22 the composition is skewed to pro residues; the sequence is YPPPQGPPPN. Composition is skewed to low complexity over residues 23 to 34 and 49 to 62; these read NNGYNSGPNNSY and QYDQQSQYSQQSQP. Catalysis depends on residues His-193 and Cys-249.

It belongs to the peptidase C14B family.

Involved in cell death (apoptosis). This is Metacaspase-1 (MCA1) from Scheffersomyces stipitis (strain ATCC 58785 / CBS 6054 / NBRC 10063 / NRRL Y-11545) (Yeast).